A 337-amino-acid chain; its full sequence is F-box protein At2g27310 (337 aa).

The F-box domain maps to 10-58 (DSISTLHSDIIQTQILTRLDGPTLASTATTSSYLQTLCTEEKLWQELSI).

The protein is F-box protein At2g27310 of Arabidopsis thaliana (Mouse-ear cress).